The sequence spans 299 residues: Ribonuclease H2 subunit A (299 aa).

M1 carries the post-translational modification N-acetylmethionine. Positions 28 to 250 constitute an RNase H type-2 domain; that stretch reads PCVLGVDEAG…AQTILEKEAE (223 aa). Residues D34, E35, and D141 each contribute to the a divalent metal cation site. Residues T204 and T216 each carry the phosphothreonine modification. S257 and S277 each carry phosphoserine.

This sequence belongs to the RNase HII family. Eukaryotic subfamily. As to quaternary structure, the RNase H2 complex is a heterotrimer composed of the catalytic subunit RNASEH2A and the non-catalytic subunits RNASEH2B and RNASEH2C. It depends on Mn(2+) as a cofactor. The cofactor is Mg(2+).

It is found in the nucleus. It catalyses the reaction Endonucleolytic cleavage to 5'-phosphomonoester.. Catalytic subunit of RNase HII, an endonuclease that specifically degrades the RNA of RNA:DNA hybrids. Participates in DNA replication, possibly by mediating the removal of lagging-strand Okazaki fragment RNA primers during DNA replication. Mediates the excision of single ribonucleotides from DNA:RNA duplexes. The polypeptide is Ribonuclease H2 subunit A (RNASEH2A) (Homo sapiens (Human)).